A 536-amino-acid chain; its full sequence is Putative UDP-glucuronosyltransferase ugt-47 (536 aa).

An N-terminal signal peptide occupies residues Met-1–Ala-21. 2 N-linked (GlcNAc...) asparagine glycosylation sites follow: Asn-52 and Asn-308. Residues Ile-497–Ile-517 traverse the membrane as a helical segment.

Belongs to the UDP-glycosyltransferase family.

The protein localises to the membrane. The catalysed reaction is glucuronate acceptor + UDP-alpha-D-glucuronate = acceptor beta-D-glucuronoside + UDP + H(+). This chain is Putative UDP-glucuronosyltransferase ugt-47 (ugt-47), found in Caenorhabditis briggsae.